The chain runs to 296 residues: Cytidine deaminase (296 aa).

CMP/dCMP-type deaminase domains follow at residues 47–167 and 186–296; these read DSHE…FGPA and ESDD…VDPV. 88–90 provides a ligand contact to substrate; it reads NLE. Position 101 (His-101) interacts with Zn(2+). Residue Glu-103 is the Proton donor of the active site. Residues Cys-128 and Cys-131 each contribute to the Zn(2+) site.

It belongs to the cytidine and deoxycytidylate deaminase family. As to quaternary structure, homodimer. Zn(2+) is required as a cofactor.

It catalyses the reaction cytidine + H2O + H(+) = uridine + NH4(+). The catalysed reaction is 2'-deoxycytidine + H2O + H(+) = 2'-deoxyuridine + NH4(+). Functionally, this enzyme scavenges exogenous and endogenous cytidine and 2'-deoxycytidine for UMP synthesis. This is Cytidine deaminase from Shewanella amazonensis (strain ATCC BAA-1098 / SB2B).